A 370-amino-acid polypeptide reads, in one-letter code: 3-isopropylmalate dehydrogenase 2 (370 aa).

77–90 contributes to the NAD(+) binding site; that stretch reads GPKWDAVPYEVRPE. Residues R97, R107, R135, and D226 each contribute to the substrate site. Mg(2+)-binding residues include D226, D250, and D254. NAD(+) is bound at residue 290–302; the sequence is GSAPDIAGKGLAN.

The protein belongs to the isocitrate and isopropylmalate dehydrogenases family. LeuB type 1 subfamily. In terms of assembly, homodimer. The cofactor is Mg(2+). Mn(2+) serves as cofactor.

The protein localises to the cytoplasm. The catalysed reaction is (2R,3S)-3-isopropylmalate + NAD(+) = 4-methyl-2-oxopentanoate + CO2 + NADH. The protein operates within amino-acid biosynthesis; L-leucine biosynthesis; L-leucine from 3-methyl-2-oxobutanoate: step 3/4. Functionally, catalyzes the oxidation of 3-carboxy-2-hydroxy-4-methylpentanoate (3-isopropylmalate) to 3-carboxy-4-methyl-2-oxopentanoate. The product decarboxylates to 4-methyl-2 oxopentanoate. The protein is 3-isopropylmalate dehydrogenase 2 of Bradyrhizobium diazoefficiens (strain JCM 10833 / BCRC 13528 / IAM 13628 / NBRC 14792 / USDA 110).